A 535-amino-acid polypeptide reads, in one-letter code: MVNIILLIVSALIGLILGYALISIRLKSAKEAAELTLLNAEQEAVDIRGKAEVDAEHIKKTAKRESKANRKELLLEAKEEARKYREEIEQEFKSERQELKQLETRLAERSLTLDRKDENLSSKEKVLDSKEQSLTDKSKHIDERQLQVEKLEEEKKAELEKVAAMTIAEAREVILMETENKLTHEIATRIRDAERDIKDRTVKTAKDLLAQAMQRLAGEYVTEQTITSVHLPDDNMKGRIIGREGRNIRTLESLTGIDVIIDDTPEVVILSGFDPIRREIARMTLESLIADGRIHPARIEELVEKNRLEMDNRIREYGEAAAYEIGAPNLHPDLIKIMGRLQFRTSFGQNVLRHSVEVGKLAGILAGELGENVALARRAGFLHDMGKAIDREVEGSHVEIGMEFARKYKEHPVVVNTIASHHGDVEPDSVIAVLVAAADALSSARPGARNESMENYIKRLRDLEEIATSFDGVQNSFALQAGREIRIMVQPEKISDDQVVILSHKVREKIEHNLDYPGNIKVTVIREMRAVDYAK.

A helical membrane pass occupies residues 4–24 (IILLIVSALIGLILGYALISI). The interval 118–141 (ENLSSKEKVLDSKEQSLTDKSKHI) is disordered. In terms of domain architecture, KH spans 225-285 (TITSVHLPDD…IRREIARMTL (61 aa)). The HD domain maps to 351-444 (VLRHSVEVGK…VAAADALSSA (94 aa)).

This sequence belongs to the RNase Y family.

It is found in the cell membrane. Its function is as follows. Endoribonuclease that initiates mRNA decay. The chain is Ribonuclease Y from Streptococcus pyogenes serotype M18 (strain MGAS8232).